We begin with the raw amino-acid sequence, 94 residues long: Large ribosomal subunit protein bL27 (94 aa).

A propeptide spanning residues 1-10 (MQFLFNIQLF) is cleaved from the precursor.

It belongs to the bacterial ribosomal protein bL27 family. The N-terminus is cleaved by ribosomal processing cysteine protease Prp.

This is Large ribosomal subunit protein bL27 from Fusobacterium nucleatum subsp. nucleatum (strain ATCC 25586 / DSM 15643 / BCRC 10681 / CIP 101130 / JCM 8532 / KCTC 2640 / LMG 13131 / VPI 4355).